Here is a 593-residue protein sequence, read N- to C-terminus: Aspartate--tRNA(Asp/Asn) ligase (593 aa).

Position 173 (E173) interacts with L-aspartate. The interval 197–200 (QLFK) is aspartate. R219 provides a ligand contact to L-aspartate. Residues 219–221 (RDE) and Q228 contribute to the ATP site. Position 451 (H451) interacts with L-aspartate. ATP is bound at residue E485. R492 lines the L-aspartate pocket. Position 537–540 (537–540 (GIDR)) interacts with ATP.

It belongs to the class-II aminoacyl-tRNA synthetase family. Type 1 subfamily. Homodimer.

Its subcellular location is the cytoplasm. The enzyme catalyses tRNA(Asx) + L-aspartate + ATP = L-aspartyl-tRNA(Asx) + AMP + diphosphate. Aspartyl-tRNA synthetase with relaxed tRNA specificity since it is able to aspartylate not only its cognate tRNA(Asp) but also tRNA(Asn). Reaction proceeds in two steps: L-aspartate is first activated by ATP to form Asp-AMP and then transferred to the acceptor end of tRNA(Asp/Asn). This is Aspartate--tRNA(Asp/Asn) ligase from Legionella pneumophila (strain Paris).